The following is a 395-amino-acid chain: Succinyl-diaminopimelate desuccinylase (395 aa).

His74 contacts Zn(2+). The active site involves Asp76. Residue Asp107 coordinates Zn(2+). The Proton acceptor role is filled by Glu141. Residues Glu142, Glu170, and His368 each coordinate Zn(2+).

Belongs to the peptidase M20A family. DapE subfamily. As to quaternary structure, homodimer. Zn(2+) is required as a cofactor. The cofactor is Co(2+).

It carries out the reaction N-succinyl-(2S,6S)-2,6-diaminopimelate + H2O = (2S,6S)-2,6-diaminopimelate + succinate. It functions in the pathway amino-acid biosynthesis; L-lysine biosynthesis via DAP pathway; LL-2,6-diaminopimelate from (S)-tetrahydrodipicolinate (succinylase route): step 3/3. Functionally, catalyzes the hydrolysis of N-succinyl-L,L-diaminopimelic acid (SDAP), forming succinate and LL-2,6-diaminopimelate (DAP), an intermediate involved in the bacterial biosynthesis of lysine and meso-diaminopimelic acid, an essential component of bacterial cell walls. This is Succinyl-diaminopimelate desuccinylase from Brucella melitensis biotype 2 (strain ATCC 23457).